The chain runs to 627 residues: Phosphomethylpyrimidine synthase (627 aa).

Over residues 1-24 the composition is skewed to polar residues; the sequence is MSATQKNNITRLEQLDRQSTQPFP. Positions 1–29 are disordered; the sequence is MSATQKNNITRLEQLDRQSTQPFPNSRKV. Substrate-binding positions include asparagine 231, methionine 260, tyrosine 289, histidine 325, 345–347, 386–389, and glutamate 425; these read SRG and DGLR. Residue histidine 429 coordinates Zn(2+). Tyrosine 452 lines the substrate pocket. Zn(2+) is bound at residue histidine 493. The [4Fe-4S] cluster site is built by cysteine 573, cysteine 576, and cysteine 581.

The protein belongs to the ThiC family. Homodimer. It depends on [4Fe-4S] cluster as a cofactor.

The enzyme catalyses 5-amino-1-(5-phospho-beta-D-ribosyl)imidazole + S-adenosyl-L-methionine = 4-amino-2-methyl-5-(phosphooxymethyl)pyrimidine + CO + 5'-deoxyadenosine + formate + L-methionine + 3 H(+). Its pathway is cofactor biosynthesis; thiamine diphosphate biosynthesis. In terms of biological role, catalyzes the synthesis of the hydroxymethylpyrimidine phosphate (HMP-P) moiety of thiamine from aminoimidazole ribotide (AIR) in a radical S-adenosyl-L-methionine (SAM)-dependent reaction. This is Phosphomethylpyrimidine synthase from Pseudomonas paraeruginosa (strain DSM 24068 / PA7) (Pseudomonas aeruginosa (strain PA7)).